A 224-amino-acid polypeptide reads, in one-letter code: uncharacterized protein (224 aa).

The ABC transporter domain occupies 2-221 (IEAKNVWKIY…KLRDGEIVEI (220 aa)). An ATP-binding site is contributed by 38–45 (GPSGCGKS).

Belongs to the ABC transporter superfamily.

This is an uncharacterized protein from Methanocaldococcus jannaschii (strain ATCC 43067 / DSM 2661 / JAL-1 / JCM 10045 / NBRC 100440) (Methanococcus jannaschii).